The following is a 311-amino-acid chain: L-lactate dehydrogenase (311 aa).

NAD(+) contacts are provided by residues Val12, Asp33, Lys38, Tyr63, and 77-78 (GA). Residues Gln80, Arg86, and 118–121 (NPVD) each bind substrate. Residues 116–118 (VTN) and Ser141 each bind NAD(+). Residue 146-149 (DSAR) participates in substrate binding. Arg151 and His166 together coordinate beta-D-fructose 1,6-bisphosphate. His173 serves as the catalytic Proton acceptor. Tyr219 carries the phosphotyrosine modification. Residue Thr228 participates in substrate binding.

This sequence belongs to the LDH/MDH superfamily. LDH family. In terms of assembly, homotetramer.

The protein localises to the cytoplasm. It catalyses the reaction (S)-lactate + NAD(+) = pyruvate + NADH + H(+). It participates in fermentation; pyruvate fermentation to lactate; (S)-lactate from pyruvate: step 1/1. Allosterically activated by fructose 1,6-bisphosphate (FBP). Functionally, catalyzes the conversion of lactate to pyruvate. In Thermoanaerobacter pseudethanolicus (strain ATCC 33223 / 39E) (Clostridium thermohydrosulfuricum), this protein is L-lactate dehydrogenase.